The chain runs to 280 residues: Shikimate dehydrogenase (NADP(+)) (280 aa).

Shikimate contacts are provided by residues 19-21 (SFS) and Thr66. The active-site Proton acceptor is the Lys70. Glu82 contributes to the NADP(+) binding site. Shikimate contacts are provided by Asn91 and Asp106. NADP(+) is bound by residues 130-134 (GSGGA) and Leu222. Residue Tyr224 participates in shikimate binding. Gly245 contributes to the NADP(+) binding site.

This sequence belongs to the shikimate dehydrogenase family. As to quaternary structure, homodimer.

It catalyses the reaction shikimate + NADP(+) = 3-dehydroshikimate + NADPH + H(+). It participates in metabolic intermediate biosynthesis; chorismate biosynthesis; chorismate from D-erythrose 4-phosphate and phosphoenolpyruvate: step 4/7. In terms of biological role, involved in the biosynthesis of the chorismate, which leads to the biosynthesis of aromatic amino acids. Catalyzes the reversible NADPH linked reduction of 3-dehydroshikimate (DHSA) to yield shikimate (SA). In Methanococcus maripaludis (strain C7 / ATCC BAA-1331), this protein is Shikimate dehydrogenase (NADP(+)).